The primary structure comprises 191 residues: Adenylate kinase (191 aa).

12-17 (GSGKTT) is an ATP binding site. An NMP region spans residues 34 to 63 (STGDLLRAESAKKTERGLLIEKFTSQGELV). AMP is bound by residues Thr-35, Arg-40, 61–63 (ELV), 88–91 (GYPR), and Gln-95. The interval 130–136 (GRSRGAD) is LID. Arg-131 contributes to the ATP binding site. 2 residues coordinate AMP: Arg-133 and Arg-145. An ATP-binding site is contributed by Arg-173.

It belongs to the adenylate kinase family. As to quaternary structure, monomer.

It is found in the cytoplasm. The catalysed reaction is AMP + ATP = 2 ADP. It participates in purine metabolism; AMP biosynthesis via salvage pathway; AMP from ADP: step 1/1. Catalyzes the reversible transfer of the terminal phosphate group between ATP and AMP. Plays an important role in cellular energy homeostasis and in adenine nucleotide metabolism. The protein is Adenylate kinase of Helicobacter pylori (strain ATCC 700392 / 26695) (Campylobacter pylori).